A 171-amino-acid polypeptide reads, in one-letter code: tRNA-splicing endonuclease subunit Sen15 (171 aa).

The interval 1–35 is disordered; the sequence is MEERGDSEPTPGCSGLGPGGVRGFGDGGGAPSWAP. Ser-7 carries the phosphoserine modification. Over residues 14–30 the composition is skewed to gly residues; sequence SGLGPGGVRGFGDGGGA. Ser-168 bears the Phosphoserine mark.

It belongs to the SEN15 family. As to quaternary structure, homodimer. tRNA splicing endonuclease is a heterotetramer composed of TSEN2, TSEN15, TSEN34/LENG5 and TSEN54. tRNA splicing endonuclease complex also contains proteins of the Pre-mRNA 3' end processing machinery, such as CLP1, CPSF1, CPSF4 and CSTF2. Widely expressed. Highly expressed in testis and uterus.

It is found in the nucleus. It localises to the nucleolus. Its function is as follows. Non-catalytic subunit of the tRNA-splicing endonuclease complex, a complex responsible for identification and cleavage of the splice sites in pre-tRNA. It cleaves pre-tRNA at the 5' and 3' splice sites to release the intron. The products are an intron and two tRNA half-molecules bearing 2',3' cyclic phosphate and 5'-OH termini. There are no conserved sequences at the splice sites, but the intron is invariably located at the same site in the gene, placing the splice sites an invariant distance from the constant structural features of the tRNA body. The tRNA splicing endonuclease is also involved in mRNA processing via its association with pre-mRNA 3'-end processing factors, establishing a link between pre-tRNA splicing and pre-mRNA 3'-end formation, suggesting that the endonuclease subunits function in multiple RNA-processing events. The sequence is that of tRNA-splicing endonuclease subunit Sen15 (TSEN15) from Homo sapiens (Human).